The chain runs to 1351 residues: MFTKILKKFFSSYEKLKDNEDENEPSSNSTNNFYKTCPEDNSSKWSKISFNWVTKLIMKGYLKESLEMNDIYDLPELNKVQTTSKLLEDIDLSNNSNYTLIKHIYKKFLPKNKYALVSNLFIIIFTFLSPICLKFLINYISIQDENEKSILKGILLCCLLCLCVLGQSISQELFYWFGIKNGFDVRGALAAKIFEKTLKLSNASRKEYKSGKIMNIMSIDVANISEYFWTHHINIVSHFIQILSLVGLLCYVVGPSGLVGFGVMVIALPINAMLCAKSSNYLEKSLEYSDSRTNLTSELITNIRPFKMYAWENFFINKIDGQRKQELKNIFLRIFYSILDHMMIETNATLVLVSTFATYSLNGNTMSLDVTFTAMTIFSKLEVPLIRLPYDIFKAIGLIPSVKRVQNFLKSSESLKYNKNFKNENQKITTTKENNNQHGQDNDIIVENCTFQWNEPENNNIFELNYGDNEEEENQDESINKKENDNEEFNYKLKDINLIVPKGKLTMICGVVGSGKTSLIFGLIGEIYKLNGSVSGVPNNISFTSQQPFLLSASLRENILFGNEFDIERYKKVIESTALTKDIVNLAGLDLTEIGERGINLSGGQKQRISLARALYANSDCFIFDEPLSAVDPEVASHLFDHCIQGELMRNKTRILVTHQLQFIPYADHIIVLNSNGQLIQGTYQELNEKGIDFKSILKTKEIKKNVENETDSEELIKNEIEIENEIIDVNNAISDKNDPNLIEKAKLLVKEDKNEGEVEFNVYKKYFSYGSSGVTLFITISLFFVGQAIFKVSDFWLTIWTERSIEGKSDSFYIGYYLLIFGTFVVILMIRILLLCRITFNVGKNLHSALLKSVTYASCRFFDTNPSGRILNRFSKDTSDIDIHMFDILTEVSMCFSELTIGLISIVFIIPIMVIPLIILSIAYYILQRLYRPSARELNRWESITVSPIFSLLQECYNGLLTIRTYKQESRFIKEMFDNININLGCFFYSFAVHRWVSMRLEVMGWIMVFFTSLIATLFISNNGLAALSVTTALSLNGYLSWGIRRIVDLEVKMNSFQRIQSYIEIPKEGNKLVSTNSNEVDNHTIKDADLVNWPNKGIIEFKNVEIKYRPNSEPNLKDLSFKVQSSEKIGIVGRTGAGKTTIASSLFRMVECSKGLILIDGIDISKVQLQKLRSSIGIVPQDPFIFTGTIRSNIDPFNEFTDFEIWESVEKVKLKDAINSMPLKLETALQENGDNGFSYGQKQLLCLCRTILKNFKIILMDEATSSIDYHTAQLIKQTIQENFKDCTTLTIAHRLETIIDCNKIAVIDSGQLIEFDTPSNLMNIPNSKFNKLIKSQTDYNNNEKTIINK.

An ABC transmembrane type-1 1 domain is found at 112-397; it reads NKYALVSNLF…LPYDIFKAIG (286 aa). A run of 3 helical transmembrane segments spans residues 120–140, 149–169, and 248–268; these read LFII…INYI, SILK…GQSI, and LLCY…VIAL. Residues 474 to 700 form the ABC transporter 1 domain; the sequence is NQDESINKKE…GIDFKSILKT (227 aa). 510-517 contributes to the ATP binding site; that stretch reads GVVGSGKT. A coiled-coil region spans residues 701–734; the sequence is KEIKKNVENETDSEELIKNEIEIENEIIDVNNAI. 6 helical membrane-spanning segments follow: residues 771 to 791, 815 to 835, 904 to 924, 977 to 999, 1002 to 1022, and 1025 to 1045; these read GSSG…QAIF, IGYY…RILL, LISI…LSIA, MFDN…RWVS, LEVM…LFIS, and GLAA…SWGI. The ABC transmembrane type-1 2 domain occupies 777 to 1060; the sequence is LFITISLFFV…LEVKMNSFQR (284 aa). Residues 1101 to 1336 enclose the ABC transporter 2 domain; it reads IEFKNVEIKY…PNSKFNKLIK (236 aa). 1135–1142 provides a ligand contact to ATP; that stretch reads GRTGAGKT.

This sequence belongs to the ABC transporter superfamily. ABCC family. Conjugate transporter (TC 3.A.1.208) subfamily.

The protein resides in the membrane. This chain is ABC transporter C family member 6 (abcC6), found in Dictyostelium discoideum (Social amoeba).